A 295-amino-acid polypeptide reads, in one-letter code: Shikimate dehydrogenase (NADP(+)) (295 aa).

Shikimate is bound by residues 18-20 (SRS) and threonine 66. Residue lysine 70 is the Proton acceptor of the active site. Shikimate-binding residues include asparagine 91 and aspartate 106. NADP(+)-binding positions include 130–134 (GNGGA) and methionine 235. Position 237 (tyrosine 237) interacts with shikimate. Glycine 258 provides a ligand contact to NADP(+).

Belongs to the shikimate dehydrogenase family. Homodimer.

The catalysed reaction is shikimate + NADP(+) = 3-dehydroshikimate + NADPH + H(+). It participates in metabolic intermediate biosynthesis; chorismate biosynthesis; chorismate from D-erythrose 4-phosphate and phosphoenolpyruvate: step 4/7. In terms of biological role, involved in the biosynthesis of the chorismate, which leads to the biosynthesis of aromatic amino acids. Catalyzes the reversible NADPH linked reduction of 3-dehydroshikimate (DHSA) to yield shikimate (SA). The sequence is that of Shikimate dehydrogenase (NADP(+)) from Chlorobium phaeobacteroides (strain DSM 266 / SMG 266 / 2430).